Here is a 124-residue protein sequence, read N- to C-terminus: Fluoride-specific ion channel FluC (124 aa).

The next 4 helical transmembrane spans lie at 4–24 (ILFVALGGSIGAVFRYLISIF), 35–55 (FGTLLVNIIGSFLMGVIYALG), 70–90 (VGLLGALTTFSTFSNETLLLI), and 95–115 (WLKAFLNIALNLCLCIFMVYL). Na(+) is bound by residues glycine 74 and threonine 77.

The protein belongs to the fluoride channel Fluc/FEX (TC 1.A.43) family.

Its subcellular location is the cell inner membrane. It catalyses the reaction fluoride(in) = fluoride(out). Its activity is regulated as follows. Na(+) is not transported, but it plays an essential structural role and its presence is essential for fluoride channel function. Its function is as follows. Fluoride-specific ion channel. Important for reducing fluoride concentration in the cell, thus reducing its toxicity. The chain is Fluoride-specific ion channel FluC from Shewanella woodyi (strain ATCC 51908 / MS32).